The primary structure comprises 99 residues: Late cornified envelope protein 4A (99 aa).

The segment at 78 to 99 is disordered; sequence CYGSGSGQQSGGSGCCSGGGCC. A compositionally biased stretch (gly residues) spans 81–99; it reads SGSGQQSGGSGCCSGGGCC.

This sequence belongs to the LCE family. As to quaternary structure, interacts with CYSRT1; the interaction is direct. In terms of tissue distribution, skin-specific. Expression was readily detected in adult trunk skin, adult arm skin, fetal skin, penal skin, vulva, esophagus and tongue. Not expressed in the cervix, rectum, lung, colon, or placenta.

Functionally, precursors of the cornified envelope of the stratum corneum. The sequence is that of Late cornified envelope protein 4A (LCE4A) from Homo sapiens (Human).